Reading from the N-terminus, the 340-residue chain is Putative 2-hydroxyacid dehydrogenase C1773.17c (340 aa).

NAD(+) is bound by residues Ala169–Ile170, Thr249–Arg251, and Asp275. The active site involves Arg251. Glu280 is an active-site residue. The active-site Proton donor is His298. His298 to Val301 is an NAD(+) binding site.

The protein belongs to the D-isomer specific 2-hydroxyacid dehydrogenase family.

This Schizosaccharomyces pombe (strain 972 / ATCC 24843) (Fission yeast) protein is Putative 2-hydroxyacid dehydrogenase C1773.17c.